Here is a 343-residue protein sequence, read N- to C-terminus: Dihydroorotase (343 aa).

The Zn(2+) site is built by H13 and H15. Residues 15 to 17 (HLR) and N41 each bind substrate. Residues K99, H136, and H174 each contribute to the Zn(2+) site. K99 carries the N6-carboxylysine modification. H136 contacts substrate. Substrate is bound at residue L219. Residue D247 participates in Zn(2+) binding. D247 is an active-site residue. Substrate contacts are provided by H251 and A263.

Belongs to the metallo-dependent hydrolases superfamily. DHOase family. Class II DHOase subfamily. As to quaternary structure, homodimer. Requires Zn(2+) as cofactor.

It carries out the reaction (S)-dihydroorotate + H2O = N-carbamoyl-L-aspartate + H(+). It functions in the pathway pyrimidine metabolism; UMP biosynthesis via de novo pathway; (S)-dihydroorotate from bicarbonate: step 3/3. Catalyzes the reversible cyclization of carbamoyl aspartate to dihydroorotate. The chain is Dihydroorotase from Alkalilimnicola ehrlichii (strain ATCC BAA-1101 / DSM 17681 / MLHE-1).